A 348-amino-acid polypeptide reads, in one-letter code: ATPase GET3 (348 aa).

26-33 (KGGVGKTT) contributes to the ATP binding site. D57 is an active-site residue. Positions 241 and 268 each coordinate ATP. Residues C280 and C283 each coordinate Zn(2+). An ATP-binding site is contributed by 310–312 (PLL).

It belongs to the arsA ATPase family. Homodimer. Component of the Golgi to ER traffic (GET) complex, which is composed of GET1, GET2 and GET3. Within the complex, GET1 and GET2 form a heterotetramer which is stabilized by phosphatidylinositol binding and which binds to the GET3 homodimer. Interacts with the chloride channel protein GEF1.

Its subcellular location is the cytoplasm. The protein resides in the endoplasmic reticulum. The protein localises to the golgi apparatus. In terms of biological role, ATPase required for the post-translational delivery of tail-anchored (TA) proteins to the endoplasmic reticulum. Recognizes and selectively binds the transmembrane domain of TA proteins in the cytosol. This complex then targets to the endoplasmic reticulum by membrane-bound receptors GET1 and GET2, where the tail-anchored protein is released for insertion. This process is regulated by ATP binding and hydrolysis. ATP binding drives the homodimer towards the closed dimer state, facilitating recognition of newly synthesized TA membrane proteins. ATP hydrolysis is required for insertion. Subsequently, the homodimer reverts towards the open dimer state, lowering its affinity for the GET1-GET2 receptor, and returning it to the cytosol to initiate a new round of targeting. Cooperates with the HDEL receptor ERD2 to mediate the ATP-dependent retrieval of resident ER proteins that contain a C-terminal H-D-E-L retention signal from the Golgi to the ER. Involved in low-level resistance to the oxyanions arsenite and arsenate, and in heat tolerance. The protein is ATPase GET3 of Debaryomyces hansenii (strain ATCC 36239 / CBS 767 / BCRC 21394 / JCM 1990 / NBRC 0083 / IGC 2968) (Yeast).